We begin with the raw amino-acid sequence, 254 residues long: Axonemal dynein light intermediate polypeptide 1 (254 aa).

The tract at residues 1–55 (MIPPADSLLKHDNPVLISKNTERKSPKSRPLKVSSPQTVLTAPVPPPPKPKTPLL) is disordered. The stretch at 175 to 245 (ALQAEQGKSD…KRTNQQLKAQ (71 aa)) forms a coiled coil.

This sequence belongs to the inner dynein arm light chain family.

Its subcellular location is the cell projection. It localises to the cilium. The protein localises to the flagellum. It is found in the dynein axonemal particle. The protein resides in the cytoplasm. Involved in sperm flagellum assembly. The polypeptide is Axonemal dynein light intermediate polypeptide 1 (Xenopus laevis (African clawed frog)).